Here is a 199-residue protein sequence, read N- to C-terminus: Hematopoietic prostaglandin D synthase (199 aa).

Residues 2-79 (PNYKLLYFNM…YLTKNTDLAG (78 aa)) enclose the GST N-terminal domain. Residues Tyr8, Arg14, Trp39, 49–51 (GKI), and 63–64 (QS) contribute to the glutathione site. The 119-residue stretch at 81-199 (TELEQCQVDA…WILKRPQTKL (119 aa)) folds into the GST C-terminal domain.

This sequence belongs to the GST superfamily. Sigma family. Homodimer. It depends on glutathione as a cofactor. Highly expressed in spleen and bone marrow. Lower levels of expression in small intestine, colon, liver, pancreas and skin. Not detected in brain, heart, lung or kidney (at protein level).

It is found in the cytoplasm. It catalyses the reaction prostaglandin H2 = prostaglandin D2. The catalysed reaction is RX + glutathione = an S-substituted glutathione + a halide anion + H(+). The enzyme catalyses 2-glyceryl-prostaglandin H2 = 2-glyceryl-prostaglandin D2. Its function is as follows. Bifunctional enzyme which catalyzes both the conversion of PGH2 to PGD2, a prostaglandin involved in smooth muscle contraction/relaxation and a potent inhibitor of platelet aggregation, and the conjugation of glutathione with a wide range of aryl halides and organic isothiocyanates. Also exhibits low glutathione-peroxidase activity towards cumene hydroperoxide. This chain is Hematopoietic prostaglandin D synthase, found in Rattus norvegicus (Rat).